A 294-amino-acid polypeptide reads, in one-letter code: 4-hydroxy-tetrahydrodipicolinate synthase (294 aa).

Threonine 47 is a binding site for pyruvate. Catalysis depends on tyrosine 136, which acts as the Proton donor/acceptor. Residue lysine 164 is the Schiff-base intermediate with substrate of the active site. Pyruvate is bound at residue valine 206.

This sequence belongs to the DapA family. Homotetramer; dimer of dimers.

The protein localises to the cytoplasm. The catalysed reaction is L-aspartate 4-semialdehyde + pyruvate = (2S,4S)-4-hydroxy-2,3,4,5-tetrahydrodipicolinate + H2O + H(+). Its pathway is amino-acid biosynthesis; L-lysine biosynthesis via DAP pathway; (S)-tetrahydrodipicolinate from L-aspartate: step 3/4. Functionally, catalyzes the condensation of (S)-aspartate-beta-semialdehyde [(S)-ASA] and pyruvate to 4-hydroxy-tetrahydrodipicolinate (HTPA). The protein is 4-hydroxy-tetrahydrodipicolinate synthase of Nostoc sp. (strain PCC 7120 / SAG 25.82 / UTEX 2576).